Reading from the N-terminus, the 23-residue chain is NADH-ubiquinone oxidoreductase 29 kDa subunit (23 aa).

In terms of assembly, complex I is composed of about 45 different subunits.

Its subcellular location is the mitochondrion inner membrane. It catalyses the reaction a ubiquinone + NADH + 5 H(+)(in) = a ubiquinol + NAD(+) + 4 H(+)(out). Functionally, transfer of electrons from NADH to the respiratory chain. The immediate electron acceptor for the enzyme is believed to be ubiquinone. In Solanum tuberosum (Potato), this protein is NADH-ubiquinone oxidoreductase 29 kDa subunit.